A 227-amino-acid polypeptide reads, in one-letter code: PKHD-type hydroxylase Bphy_5374 (227 aa).

A Fe2OG dioxygenase domain is found at 79-179 (KVYPPLFNRY…RVASFFWVQS (101 aa)). Residues H97, D99, and H160 each contribute to the Fe cation site. R170 contacts 2-oxoglutarate.

Requires Fe(2+) as cofactor. It depends on L-ascorbate as a cofactor.

This is PKHD-type hydroxylase Bphy_5374 from Paraburkholderia phymatum (strain DSM 17167 / CIP 108236 / LMG 21445 / STM815) (Burkholderia phymatum).